A 162-amino-acid chain; its full sequence is ATP synthase subunit delta, mitochondrial (162 aa).

The N-terminal 24 residues, 1-24, are a transit peptide targeting the mitochondrion; it reads MFSVARTAIRGAARPAVRIARRGY.

F-type ATP synthases have 2 components, the catalytic core F(1) and the membrane-embedded component F(0), linked together by a central stalk and a peripheral stalk. The central stalk, also called rotor shaft, is often seen as part of F(1). The peripheral stalk is seen as part of F(0). F(0) contains the membrane channel next to the rotor. F-type ATP synthases form dimers but each monomer functions independently in ATP generation. The dimer consists of 17 different polypeptides: ATP1 (subunit alpha, 3 molecules per monomer, part of F(1)), ATP2 (subunit beta, 3 copies per monomer, part of F(1)), ATP3 (subunit gamma, part of the central stalk), ATP4 (subunit b, part of the peripheral stalk), ATP5/OSCP (subunit 5/OSCP, part of the peripheral stalk), ATP6 (subunit a, part of the peripheral stalk), ATP7 (subunit d, part of the peripheral stalk), ATP8 (subunit 8, part of the peripheral stalk), OLI1 (subunit c, part of the rotor, 10 molecules per monomer), ATP14 (subunit h, part of the peripheral stalk), ATP15 (subunit epsilon, part of the central stalk), ATP16 (subunit delta, part of the central stalk), ATP17 (subunit f, part of the peripheral stalk), ATP18 (subunit i/j, part of the peripheral stalk), ATP19 (subunit k, dimer-specific, at interface between monomers), ATP20 (subunit g, at interface between monomers), TIM11 (subunit e, at interface between monomers).

It localises to the mitochondrion inner membrane. In terms of biological role, mitochondrial membrane ATP synthase (F(1)F(0) ATP synthase or Complex V) produces ATP from ADP in the presence of a proton gradient across the membrane which is generated by electron transport complexes of the respiratory chain. F-type ATP synthases consist of two structural domains, F(1) - containing the extramembraneous catalytic core, and F(0) - containing the membrane proton channel, linked together by a central stalk and a peripheral stalk. During catalysis, ATP synthesis in the catalytic domain of F(1) is coupled via a rotary mechanism of the central stalk subunits to proton translocation. Part of the complex F(1) domain and the central stalk which is part of the complex rotary element. Rotation of the central stalk against the surrounding alpha/ATP1(3)beta/ATP2(3) subunits leads to hydrolysis of ATP in three separate catalytic sites on the beta/ATP2 subunits. This chain is ATP synthase subunit delta, mitochondrial, found in Yarrowia lipolytica (strain CLIB 122 / E 150) (Yeast).